A 301-amino-acid chain; its full sequence is Putative glycosyltransferase MJ1113 (301 aa).

The next 8 membrane-spanning stretches (helical) occupy residues 2–22, 62–82, 95–115, 117–137, 140–160, 164–184, 191–211, and 280–300; these read GHYF…SAVL, FIPF…IIGI, LILL…NSYV, LIEI…TNML, FNGL…LVLF, YTTG…LLIF, VFPG…LAVV, and VTVL…ISLI.

This sequence belongs to the glycosyltransferase 4 family.

It localises to the cell membrane. The protein is Putative glycosyltransferase MJ1113 of Methanocaldococcus jannaschii (strain ATCC 43067 / DSM 2661 / JAL-1 / JCM 10045 / NBRC 100440) (Methanococcus jannaschii).